We begin with the raw amino-acid sequence, 214 residues long: uncharacterized protein (214 aa).

Residues 39–68 adopt a coiled-coil conformation; sequence KLRSKKEVEEKIKEVDRELEEVVNAGVSIN. Residues 99–114 are compositionally biased toward basic and acidic residues; it reads EIKVEAPEPDEEKLPD. The disordered stretch occupies residues 99–162; that stretch reads EIKVEAPEPD…EEVEFDEEDD (64 aa). The span at 123 to 162 shows a compositional bias: acidic residues; the sequence is SDLDMDFEDLGQEIPLDADEQEEEEEEEEVEEVEFDEEDD. The stretch at 138-212 forms a coiled coil; that stretch reads LDADEQEEEE…IQRLKVLSGG (75 aa).

This is an uncharacterized protein from Archaeoglobus fulgidus (strain ATCC 49558 / DSM 4304 / JCM 9628 / NBRC 100126 / VC-16).